Here is a 190-residue protein sequence, read N- to C-terminus: HTH-type transcriptional repressor CutR (190 aa).

An HTH deoR-type domain is found at 3–58 (PINRQQHILKWLKEEGSLRISDISARFGVSEMTVYRDVNQLVQSNQVIKTAGGITL). The segment at residues 20 to 39 (LRISDISARFGVSEMTVYRD) is a DNA-binding region (H-T-H motif).

The protein localises to the cytoplasm. Functionally, may act as a negative transcriptional regulator of cutJ/ycnJ in the presence of copper. May use copper as a corepressor. This is HTH-type transcriptional repressor CutR from Bacillus subtilis (strain 168).